The sequence spans 113 residues: Insulin (113 aa).

Residues 1–24 (MAALWLQAFSLLVLMMVSWPGSQA) form the signal peptide. Intrachain disulfides connect Cys-32-Cys-99, Cys-44-Cys-112, and Cys-98-Cys-103. Residues 56-90 (DVDPLLGFLPPKAGGAVVQGGENEVTFKDQMEMMV) constitute a propeptide, c peptide.

This sequence belongs to the insulin family. Heterodimer of a B chain and an A chain linked by two disulfide bonds.

It is found in the secreted. Its function is as follows. Insulin decreases blood glucose concentration. It increases cell permeability to monosaccharides, amino acids and fatty acids. It accelerates glycolysis, the pentose phosphate cycle, and glycogen synthesis in liver. In Oreochromis niloticus (Nile tilapia), this protein is Insulin (ins).